Consider the following 260-residue polypeptide: Spectinomycin 9-adenylyltransferase (260 aa).

The enzyme catalyses spectinomycin + ATP = 9-O-adenylylspectinomycin + diphosphate. Functionally, mediates bacterial resistance to the antibiotic spectinomycin but not streptomycin. This is Spectinomycin 9-adenylyltransferase (ant1) from Staphylococcus aureus (strain Mu50 / ATCC 700699).